A 210-amino-acid chain; its full sequence is Thymidylate kinase (210 aa).

10 to 17 (GPEGAGKS) is an ATP binding site.

It belongs to the thymidylate kinase family.

The catalysed reaction is dTMP + ATP = dTDP + ADP. In terms of biological role, phosphorylation of dTMP to form dTDP in both de novo and salvage pathways of dTTP synthesis. The protein is Thymidylate kinase of Pseudomonas aeruginosa (strain LESB58).